Reading from the N-terminus, the 185-residue chain is Peptidyl-tRNA hydrolase (185 aa).

Position 14 (Y14) interacts with tRNA. H19 serves as the catalytic Proton acceptor. TRNA is bound by residues F64, N66, and N112.

Belongs to the PTH family. As to quaternary structure, monomer.

The protein resides in the cytoplasm. It carries out the reaction an N-acyl-L-alpha-aminoacyl-tRNA + H2O = an N-acyl-L-amino acid + a tRNA + H(+). Hydrolyzes ribosome-free peptidyl-tRNAs (with 1 or more amino acids incorporated), which drop off the ribosome during protein synthesis, or as a result of ribosome stalling. Its function is as follows. Catalyzes the release of premature peptidyl moieties from peptidyl-tRNA molecules trapped in stalled 50S ribosomal subunits, and thus maintains levels of free tRNAs and 50S ribosomes. The polypeptide is Peptidyl-tRNA hydrolase (Halalkalibacterium halodurans (strain ATCC BAA-125 / DSM 18197 / FERM 7344 / JCM 9153 / C-125) (Bacillus halodurans)).